Consider the following 553-residue polypeptide: Cytochrome P450 86A2 (553 aa).

A helical membrane pass occupies residues 2 to 20 (DVSNTMLLVAVVAAYWLWF). Cysteine 459 provides a ligand contact to heme.

This sequence belongs to the cytochrome P450 family. The cofactor is heme. Expressed in leaves, stems, flowers and siliques. Expressed at low levels in roots. Expressed in guard cells of cotyledons and leaves.

The protein localises to the membrane. It catalyses the reaction an organic molecule + reduced [NADPH--hemoprotein reductase] + O2 = an alcohol + oxidized [NADPH--hemoprotein reductase] + H2O + H(+). In terms of biological role, catalyzes the omega-hydroxylation of various fatty acids (FA). Acts on saturated and unsaturated fatty acids with chain lengths from C12 to C18. Plays a major role in the biosynthesis of extracellular lipids. Involved in the biosynthesis of hydroxylated fatty acids required for cutin biosynthesis, cuticle development and repression of bacterial type III gene expression. In Arabidopsis thaliana (Mouse-ear cress), this protein is Cytochrome P450 86A2 (CYP86A2).